The primary structure comprises 136 residues: Small ribosomal subunit protein uS8c (136 aa).

This sequence belongs to the universal ribosomal protein uS8 family. As to quaternary structure, part of the 30S ribosomal subunit.

It localises to the plastid. It is found in the chloroplast. Its function is as follows. One of the primary rRNA binding proteins, it binds directly to 16S rRNA central domain where it helps coordinate assembly of the platform of the 30S subunit. This Morus indica (Mulberry) protein is Small ribosomal subunit protein uS8c (rps8).